Consider the following 259-residue polypeptide: Probable ABC transporter arginine-binding protein ArtJ (259 aa).

An N-terminal signal peptide occupies residues 1-25 (MIKQIGRFFRAFIFIMPLSLTSCES). N38, E45, A96, G97, S99, R104, and F149 together coordinate L-arginine.

Belongs to the bacterial solute-binding protein 3 family.

It is found in the secreted. The protein localises to the cell surface. Its function is as follows. Probably part of an ABC transporter complex involved in arginine transport. Binds arginine. Interacts with host epithelial cells, suggesting a role in host-cell adhesion during infection. This is Probable ABC transporter arginine-binding protein ArtJ from Chlamydia pneumoniae (Chlamydophila pneumoniae).